Reading from the N-terminus, the 563-residue chain is Methylcrotonoyl-CoA carboxylase beta chain, mitochondrial (563 aa).

A mitochondrion-targeting transit peptide spans 1 to 22 (MWGALRSALRPCCRAAVPPQRA). One can recognise a CoA carboxyltransferase N-terminal domain in the interval 49 to 306 (MKALVSQLHE…QKKMDVTIEP (258 aa)). Residues 49–555 (MKALVSQLHE…SAALNAPIQR (507 aa)) form a carboxyltransferase region. Lys70 carries the N6-acetyllysine; alternate modification. Position 70 is an N6-succinyllysine; alternate (Lys70). Lys141 carries the N6-succinyllysine modification. Positions 309–555 (EPLFPADELY…SAALNAPIQR (247 aa)) constitute a CoA carboxyltransferase C-terminal domain. The tract at residues 343-372 (RFNEFKALYGDTLVTGFARIFGYPVGIIGN) is acyl-CoA binding. The residue at position 433 (Lys433) is an N6-succinyllysine. Position 495 is an N6-acetyllysine; alternate (Lys495). At Lys495 the chain carries N6-succinyllysine; alternate. Residue Lys511 is modified to N6-acetyllysine.

Belongs to the AccD/PCCB family. In terms of assembly, probably a dodecamer composed of six biotin-containing alpha subunits (MCCC1) and six beta (MCCC2) subunits.

Its subcellular location is the mitochondrion matrix. It catalyses the reaction 3-methylbut-2-enoyl-CoA + hydrogencarbonate + ATP = 3-methyl-(2E)-glutaconyl-CoA + ADP + phosphate + H(+). The protein operates within amino-acid degradation; L-leucine degradation; (S)-3-hydroxy-3-methylglutaryl-CoA from 3-isovaleryl-CoA: step 2/3. In terms of biological role, carboxyltransferase subunit of the 3-methylcrotonyl-CoA carboxylase, an enzyme that catalyzes the conversion of 3-methylcrotonyl-CoA to 3-methylglutaconyl-CoA, a critical step for leucine and isovaleric acid catabolism. The protein is Methylcrotonoyl-CoA carboxylase beta chain, mitochondrial (Mccc2) of Mus musculus (Mouse).